We begin with the raw amino-acid sequence, 166 residues long: Cyanate hydratase (166 aa).

Residues Arg92, Glu95, and Ser118 contribute to the active site.

It belongs to the cyanase family.

The catalysed reaction is cyanate + hydrogencarbonate + 3 H(+) = NH4(+) + 2 CO2. Its function is as follows. Catalyzes the reaction of cyanate with bicarbonate to produce ammonia and carbon dioxide. In Sorghum bicolor (Sorghum), this protein is Cyanate hydratase.